A 134-amino-acid polypeptide reads, in one-letter code: Protein LctB (134 aa).

This is Protein LctB (lctB) from Bacillus caldotenax.